The chain runs to 159 residues: Ribosomal RNA large subunit methyltransferase H (159 aa).

S-adenosyl-L-methionine contacts are provided by residues Leu76, Gly108, and 127-132 (FGQLTL).

It belongs to the RNA methyltransferase RlmH family. As to quaternary structure, homodimer.

Its subcellular location is the cytoplasm. It catalyses the reaction pseudouridine(1915) in 23S rRNA + S-adenosyl-L-methionine = N(3)-methylpseudouridine(1915) in 23S rRNA + S-adenosyl-L-homocysteine + H(+). Specifically methylates the pseudouridine at position 1915 (m3Psi1915) in 23S rRNA. This chain is Ribosomal RNA large subunit methyltransferase H, found in Streptococcus suis (strain 05ZYH33).